A 184-amino-acid chain; its full sequence is Large ribosomal subunit protein uL5c (184 aa).

The protein belongs to the universal ribosomal protein uL5 family. In terms of assembly, part of the 50S ribosomal subunit; contacts the 5S rRNA.

The protein localises to the plastid. Its subcellular location is the chloroplast. Its function is as follows. Binds 5S rRNA, forms part of the central protuberance of the 50S subunit. This chain is Large ribosomal subunit protein uL5c (rpl5), found in Nephroselmis olivacea (Green alga).